A 402-amino-acid chain; its full sequence is MNEFPVVLVINCGSSSIKFSVLDASDCEVLMSGIADGINSENAFLSVNGGEPAPLAHHSYEGALKAIAFELEKRNLNDSVALIGHRIAHGGSIFTESAIITDEVIDNIRRVSPLAPLHNYANLSGIESAQQLFPGVTQVAVFDTSFHQTMAPEAYLYGLPWKYYEELGVRRYGFHGTSHRYVSLRAHSLLNLAEDDSGLVVAHLGNGASICAVRNGQSVDTSMGMTPLEGLMMGTRSGDVDFGAMSWVASQTNQSLGDLERVVNKESGLLGISGLSSDLRVLEKAWHEGHERAQLAIKTFVHRIARHIAGHAASLRRLDGIIFTGGIGENSSLIRRLVMEHLAVLGVEIDTEMNNRSNSFGERIVSSENARVICAVIPTNEEKMIALDAIHLGKVNAPAEFA.

Asn11 and Lys18 together coordinate ATP. Asn11 serves as a coordination point for Mg(2+). Arg86 serves as a coordination point for substrate. Asp143 acts as the Proton donor/acceptor in catalysis. ATP is bound by residues His175, 203 to 207, 278 to 280, and 326 to 330; these read HLGNG, DLR, and GIGEN.

Belongs to the acetokinase family. TdcD subfamily. As to quaternary structure, homodimer. Mg(2+) serves as cofactor.

The catalysed reaction is propanoate + ATP = propanoyl phosphate + ADP. It participates in amino-acid degradation; L-threonine degradation via propanoate pathway; propanoate from L-threonine: step 4/4. In terms of biological role, catalyzes the conversion of propionyl phosphate and ADP to propionate and ATP. This Escherichia coli O157:H7 protein is Propionate kinase.